The primary structure comprises 162 residues: D-aminoacyl-tRNA deacylase (162 aa).

The short motif at 143 to 144 (GP) is the Gly-cisPro motif, important for rejection of L-amino acids element.

It belongs to the DTD family. Homodimer.

The protein resides in the cytoplasm. It carries out the reaction glycyl-tRNA(Ala) + H2O = tRNA(Ala) + glycine + H(+). It catalyses the reaction a D-aminoacyl-tRNA + H2O = a tRNA + a D-alpha-amino acid + H(+). In terms of biological role, an aminoacyl-tRNA editing enzyme that deacylates mischarged D-aminoacyl-tRNAs. Also deacylates mischarged glycyl-tRNA(Ala), protecting cells against glycine mischarging by AlaRS. Acts via tRNA-based rather than protein-based catalysis; rejects L-amino acids rather than detecting D-amino acids in the active site. By recycling D-aminoacyl-tRNA to D-amino acids and free tRNA molecules, this enzyme counteracts the toxicity associated with the formation of D-aminoacyl-tRNA entities in vivo and helps enforce protein L-homochirality. This chain is D-aminoacyl-tRNA deacylase, found in Nitratidesulfovibrio vulgaris (strain ATCC 29579 / DSM 644 / CCUG 34227 / NCIMB 8303 / VKM B-1760 / Hildenborough) (Desulfovibrio vulgaris).